The primary structure comprises 86 residues: Anti-adapter protein IraP (86 aa).

Residues 1-36 (MKNLIAELLLKLAQKEEESKELCAQVEALEIIVTAM) adopt a coiled-coil conformation.

It belongs to the IraP family. Interacts with RssB.

It localises to the cytoplasm. Functionally, inhibits RpoS proteolysis by regulating RssB activity, thereby increasing the stability of the sigma stress factor RpoS especially during phosphate starvation, but also in stationary phase and during nitrogen starvation. Its effect on RpoS stability is due to its interaction with RssB, which probably blocks the interaction of RssB with RpoS, and the consequent delivery of the RssB-RpoS complex to the ClpXP protein degradation pathway. The protein is Anti-adapter protein IraP of Shigella boydii serotype 18 (strain CDC 3083-94 / BS512).